The chain runs to 144 residues: uncharacterized protein (144 aa).

Residues 24 to 67 (KLKELYQRLNQGINVEEVLKETVEDYKEKMEKYILEVLEEIEKY) are a coiled coil.

This is an uncharacterized protein from Aquifex aeolicus (strain VF5).